Reading from the N-terminus, the 404-residue chain is Pectate lyase E (404 aa).

Positions 1 to 41 (MNNSRMSSVSTQKTTGRSALGTKSALAAIIATTMMVSVASA) are cleaved as a signal peptide. Residues Asp-182 and Asp-225 each contribute to the Ca(2+) site. Arg-278 is a catalytic residue.

The protein belongs to the polysaccharide lyase 1 family. PLBC subfamily. The cofactor is Ca(2+).

It is found in the secreted. It catalyses the reaction Eliminative cleavage of (1-&gt;4)-alpha-D-galacturonan to give oligosaccharides with 4-deoxy-alpha-D-galact-4-enuronosyl groups at their non-reducing ends.. Its pathway is glycan metabolism; pectin degradation; 2-dehydro-3-deoxy-D-gluconate from pectin: step 2/5. Its function is as follows. Involved in maceration and soft-rotting of plant tissue. Pectate lyases have been implicated as pathogenicity factors which induce maceration or rotting of plant tissue. PelE is sufficient to induce these effects under laboratory conditions. The polypeptide is Pectate lyase E (pelE) (Dickeya dadantii (strain 3937) (Erwinia chrysanthemi (strain 3937))).